The sequence spans 485 residues: MQWEVVIGLETHAQLSTASKIFSGTSTAFGAEANTQASPVDLALPGVLPVLNQGAVERAIQFGLAIGATIAPRSIFARKNYFYPDLPKGYQISQYEIPVVQGGTITIQVEGRKGEFYEKTVNLTRAHLEEDAGKSLHEDFAGMTGIDLNRAGTPLLEIVTEPDMRSAAEAVAYAKALHSLVVWLGICDGNMQEGSFRCDANVSVRPVGQKEFGTRREIKNLNSFRFLQQAIEYEVQWQIAEIEDGRKIQQATVLFDPDTGETRAMRTKEDAHDYRYFPDPDLMPLEIEPAWVERVRDALPELPAAMQARFVSQYGLSAYDATTLTATKAFAAYYEAVVADAGAANAKPAANWLMGDVSSQLNREGIAIDDAPVRPAQLAKLLARIADGTVSNNTAKKDVFPAMWAGEHDGDADAIIAAKGLKQMSDSGELEKIIDDVLAANAKSVEEFRSGKEKAFNALVGQAMKATRGKANPAQVNELLRKKLG.

This sequence belongs to the GatB/GatE family. GatB subfamily. As to quaternary structure, heterotrimer of A, B and C subunits.

It carries out the reaction L-glutamyl-tRNA(Gln) + L-glutamine + ATP + H2O = L-glutaminyl-tRNA(Gln) + L-glutamate + ADP + phosphate + H(+). The enzyme catalyses L-aspartyl-tRNA(Asn) + L-glutamine + ATP + H2O = L-asparaginyl-tRNA(Asn) + L-glutamate + ADP + phosphate + 2 H(+). In terms of biological role, allows the formation of correctly charged Asn-tRNA(Asn) or Gln-tRNA(Gln) through the transamidation of misacylated Asp-tRNA(Asn) or Glu-tRNA(Gln) in organisms which lack either or both of asparaginyl-tRNA or glutaminyl-tRNA synthetases. The reaction takes place in the presence of glutamine and ATP through an activated phospho-Asp-tRNA(Asn) or phospho-Glu-tRNA(Gln). The polypeptide is Aspartyl/glutamyl-tRNA(Asn/Gln) amidotransferase subunit B (Cupriavidus taiwanensis (strain DSM 17343 / BCRC 17206 / CCUG 44338 / CIP 107171 / LMG 19424 / R1) (Ralstonia taiwanensis (strain LMG 19424))).